Consider the following 209-residue polypeptide: Ribosomal RNA large subunit methyltransferase E (209 aa).

S-adenosyl-L-methionine is bound by residues G63, W65, D83, D99, and D124. Catalysis depends on K164, which acts as the Proton acceptor.

It belongs to the class I-like SAM-binding methyltransferase superfamily. RNA methyltransferase RlmE family.

Its subcellular location is the cytoplasm. It catalyses the reaction uridine(2552) in 23S rRNA + S-adenosyl-L-methionine = 2'-O-methyluridine(2552) in 23S rRNA + S-adenosyl-L-homocysteine + H(+). In terms of biological role, specifically methylates the uridine in position 2552 of 23S rRNA at the 2'-O position of the ribose in the fully assembled 50S ribosomal subunit. This Shewanella frigidimarina (strain NCIMB 400) protein is Ribosomal RNA large subunit methyltransferase E.